The following is a 332-amino-acid chain: MANVAVMGAGSWGTTLAKVFADAGNDVRLWARREELAEAINTRHENPDYLPELPLPESIKASTDPATALQSADIVIFGVPSQTLRGNLEKWAPLLPEEATLVSISKGVEKATLNLMSEVIADAAGVSSDRIAVLSGPNLAKEVAQEQPAATVIACSDAARAEAVQHAAAAPYFRPYTNTDVIGAEIGGACKNVIALACGMAAGKGLGNNTMATIITRGLAEITRLGVKLGADPFTFSGLAGMGDLVATCSSTLSRNRTFGYRLGQGGTLEEATAATNGQVAEGVISSDSIFRLAQRADVEMPITQAVYGVCHRGVTVDDMIVALMGRTKKAE.

The NADPH site is built by Ser11, Trp12, Arg32, Arg33, and Lys106. Sn-glycerol 3-phosphate-binding residues include Lys106 and Gly136. Ala140 lines the NADPH pocket. Residues Lys191, Asp244, Ser254, Arg255, and Asn256 each coordinate sn-glycerol 3-phosphate. The active-site Proton acceptor is Lys191. Residue Arg255 participates in NADPH binding. NADPH is bound by residues Val280 and Glu282.

Belongs to the NAD-dependent glycerol-3-phosphate dehydrogenase family.

Its subcellular location is the cytoplasm. The enzyme catalyses sn-glycerol 3-phosphate + NAD(+) = dihydroxyacetone phosphate + NADH + H(+). The catalysed reaction is sn-glycerol 3-phosphate + NADP(+) = dihydroxyacetone phosphate + NADPH + H(+). The protein operates within membrane lipid metabolism; glycerophospholipid metabolism. In terms of biological role, catalyzes the reduction of the glycolytic intermediate dihydroxyacetone phosphate (DHAP) to sn-glycerol 3-phosphate (G3P), the key precursor for phospholipid synthesis. This chain is Glycerol-3-phosphate dehydrogenase [NAD(P)+], found in Corynebacterium aurimucosum (strain ATCC 700975 / DSM 44827 / CIP 107346 / CN-1) (Corynebacterium nigricans).